Reading from the N-terminus, the 194-residue chain is dTTP/UTP pyrophosphatase (194 aa).

Residue Asp-73 is the Proton acceptor of the active site.

This sequence belongs to the Maf family. YhdE subfamily. A divalent metal cation is required as a cofactor.

It localises to the cytoplasm. It catalyses the reaction dTTP + H2O = dTMP + diphosphate + H(+). It carries out the reaction UTP + H2O = UMP + diphosphate + H(+). In terms of biological role, nucleoside triphosphate pyrophosphatase that hydrolyzes dTTP and UTP. May have a dual role in cell division arrest and in preventing the incorporation of modified nucleotides into cellular nucleic acids. This chain is dTTP/UTP pyrophosphatase, found in Clostridium botulinum (strain Loch Maree / Type A3).